The primary structure comprises 496 residues: Beta-amylase (496 aa).

Substrate-binding residues include aspartate 54, histidine 94, and aspartate 102. Residue glutamate 187 is the Proton donor of the active site. Substrate contacts are provided by lysine 296, histidine 301, and threonine 343. The active-site Proton acceptor is glutamate 381. Substrate is bound by residues 382–383 (NA) and arginine 421.

The protein belongs to the glycosyl hydrolase 14 family.

The enzyme catalyses Hydrolysis of (1-&gt;4)-alpha-D-glucosidic linkages in polysaccharides so as to remove successive maltose units from the non-reducing ends of the chains.. This is Beta-amylase (BMY1) from Vigna unguiculata (Cowpea).